Here is a 304-residue protein sequence, read N- to C-terminus: NuA3 HAT complex component PDP3 (304 aa).

In terms of domain architecture, PWWP spans 7–68 (TGDLVLCKVG…PSRLKELDQD (62 aa)). The tract at residues 145 to 195 (KKNSISIKEDPEDNQKSNEEESKPNIKPSKKKRPTANSGGKSNSGNKKKVK) is disordered. Over residues 151–168 (IKEDPEDNQKSNEEESKP) the composition is skewed to basic and acidic residues.

As to quaternary structure, component of the NuA3 histone acetyltransferase (HAT) complex. The NuA3 HAT complex has 2 functionally distinct forms that participate in transcription. The NuA3a HAT complex is composed of at least NTO1, SAS3, TAF14, YNG1 and EAF6. The NuA3b HAT complex contains an additional subunit, PDP3.

It is found in the nucleus. Its subcellular location is the cytoplasm. Functionally, histone-binding component of the NuA3b histone acetyltransferase complex. Targets the NuA3b HAT complex via histone H3K36me3 to the coding regions of actively transcribed genes to coordinate transcription elongation. Stimulates elongation by RNA polymerase II in vitro. The polypeptide is NuA3 HAT complex component PDP3 (Saccharomyces cerevisiae (strain ATCC 204508 / S288c) (Baker's yeast)).